The chain runs to 265 residues: Apolipoprotein A-I (265 aa).

The N-terminal stretch at Met1–Ala18 is a signal peptide. A run of 2 repeats spans residues Leu67–Gly88 and Pro89–Asn110. Residues Leu67 to Gln265 are 10 X approximate tandem repeats. Position 109 is a methionine sulfoxide (Met109). The 3; half-length repeat unit spans residues Lys111–Gln121. 5 repeat units span residues Pro122–Val142, Pro144–Thr165, Pro166–Ala187, Pro188–Gly209, and Ser210–Lys230. Residues Pro231–Leu241 form a 9; half-length repeat. Residues Pro242–Gln265 form repeat 10.

The protein belongs to the apolipoprotein A1/A4/E family. As to quaternary structure, homodimer. Interacts with APOA1BP and CLU. Component of a sperm activating protein complex (SPAP), consisting of APOA1, an immunoglobulin heavy chain, an immunoglobulin light chain and albumin. Interacts with NDRG1. Interacts with SCGB3A2. Interacts with NAXE and YJEFN3. In terms of processing, glycosylated. Palmitoylated. Post-translationally, phosphorylation sites are present in the extracellular medium. In terms of tissue distribution, major protein of plasma HDL, also found in chylomicrons.

Its subcellular location is the secreted. Functionally, participates in the reverse transport of cholesterol from tissues to the liver for excretion by promoting cholesterol efflux from tissues and by acting as a cofactor for the lecithin cholesterol acyltransferase (LCAT). As part of the SPAP complex, activates spermatozoa motility. The chain is Apolipoprotein A-I (APOA1) from Balaenoptera acutorostrata scammoni (North Pacific minke whale).